The following is a 102-amino-acid chain: Small ribosomal subunit protein uS10 (102 aa).

This sequence belongs to the universal ribosomal protein uS10 family. Part of the 30S ribosomal subunit.

Involved in the binding of tRNA to the ribosomes. The protein is Small ribosomal subunit protein uS10 of Clostridium beijerinckii (strain ATCC 51743 / NCIMB 8052) (Clostridium acetobutylicum).